We begin with the raw amino-acid sequence, 377 residues long: Guanine nucleotide exchange factor for Rab-3A (377 aa).

Positions W23–A57 are disordered. Residues S77–R128 adopt a coiled-coil conformation. The interval P167–S198 is disordered. Phosphoserine is present on residues S169 and S180.

Belongs to the SEC2 family. As to quaternary structure, interacts with RAB3A and IHPK1 through the coiled-coil domain. This interaction is competitive. IHPK1 kinase activity is not required for this interaction. As to expression, selectively localized to the brain (at protein level).

Functionally, guanine nucleotide exchange factor (GEF) which may activate RAB3A, a GTPase that regulates synaptic vesicle exocytosis. Promotes the exchange of GDP to GTP, converting inactive GDP-bound Rab proteins into their active GTP-bound form. May also activate RAB8A and RAB8B. This is Guanine nucleotide exchange factor for Rab-3A (Rab3il1) from Rattus norvegicus (Rat).